Consider the following 146-residue polypeptide: Glycosylation-dependent cell adhesion molecule 1 (146 aa).

An N-terminal signal peptide occupies residues 1 to 19; sequence MKFFTVLLFASLAATSLAA. Residues 25-112 are disordered; the sequence is DELHLRTQPT…SAATSEGKLT (88 aa). The segment covering 48–60 has biased composition (basic and acidic residues); it reads ISKESTSSKDLSK. Phosphoserine occurs at positions 54, 59, and 71. Over residues 74 to 106 the composition is skewed to polar residues; it reads NVGTESTKPQSQEAQDGLRSGSSQQEETTSAAT.

This sequence belongs to the PP3/GlyCAM-1 family. Post-translationally, extensively O-glycosylated. Lymph nodes. Associated with the lumenal surface of the high endothelial venules of peripheral lymph nodes.

The protein localises to the cell membrane. In terms of biological role, adhesion molecule that accomplishes cell binding by presenting carbohydrate(s) to the lectin domain of L-selectin. This chain is Glycosylation-dependent cell adhesion molecule 1 (Glycam1), found in Rattus norvegicus (Rat).